Consider the following 389-residue polypeptide: Succinate--CoA ligase [ADP-forming] subunit beta (389 aa).

The region spanning 9-244 (KEILRKFGVA…LDEEDPAEVE (236 aa)) is the ATP-grasp domain. Residues lysine 46, 53–55 (GRG), glutamate 99, alanine 102, and glutamate 107 each bind ATP. Mg(2+)-binding residues include asparagine 199 and aspartate 213. Substrate-binding positions include asparagine 264 and 321 to 323 (GIM).

This sequence belongs to the succinate/malate CoA ligase beta subunit family. In terms of assembly, heterotetramer of two alpha and two beta subunits. It depends on Mg(2+) as a cofactor.

It carries out the reaction succinate + ATP + CoA = succinyl-CoA + ADP + phosphate. The enzyme catalyses GTP + succinate + CoA = succinyl-CoA + GDP + phosphate. It functions in the pathway carbohydrate metabolism; tricarboxylic acid cycle; succinate from succinyl-CoA (ligase route): step 1/1. In terms of biological role, succinyl-CoA synthetase functions in the citric acid cycle (TCA), coupling the hydrolysis of succinyl-CoA to the synthesis of either ATP or GTP and thus represents the only step of substrate-level phosphorylation in the TCA. The beta subunit provides nucleotide specificity of the enzyme and binds the substrate succinate, while the binding sites for coenzyme A and phosphate are found in the alpha subunit. This Paraburkholderia phytofirmans (strain DSM 17436 / LMG 22146 / PsJN) (Burkholderia phytofirmans) protein is Succinate--CoA ligase [ADP-forming] subunit beta.